The chain runs to 253 residues: Phosphoadenosine 5'-phosphosulfate reductase (253 aa).

The active-site Nucleophile; cysteine thiosulfonate intermediate is the cysteine 239.

It belongs to the PAPS reductase family. CysH subfamily.

It localises to the cytoplasm. The catalysed reaction is [thioredoxin]-disulfide + sulfite + adenosine 3',5'-bisphosphate + 2 H(+) = [thioredoxin]-dithiol + 3'-phosphoadenylyl sulfate. It functions in the pathway sulfur metabolism; hydrogen sulfide biosynthesis; sulfite from sulfate: step 3/3. Catalyzes the formation of sulfite from phosphoadenosine 5'-phosphosulfate (PAPS) using thioredoxin as an electron donor. In Aliivibrio fischeri (strain MJ11) (Vibrio fischeri), this protein is Phosphoadenosine 5'-phosphosulfate reductase.